A 44-amino-acid polypeptide reads, in one-letter code: U4-ctenitoxin-Co1a (44 aa).

4 disulfide bridges follow: Cys2–Cys19, Cys9–Cys25, Cys18–Cys39, and Cys27–Cys37.

Expressed by the venom gland.

The protein resides in the secreted. Omega-agatoxins are antagonists of voltage-gated calcium channels (Cav). Toxic to mice by intracerebroventricular injection. The protein is U4-ctenitoxin-Co1a of Ctenus ornatus (Brazilian spider).